The following is an 88-amino-acid chain: Small ribosomal subunit protein uS15 (88 aa).

Over residues 1–20 (MLTTQDKQNIIKENQQSEGD) the composition is skewed to polar residues. The segment at 1-24 (MLTTQDKQNIIKENQQSEGDTGSP) is disordered.

It belongs to the universal ribosomal protein uS15 family. In terms of assembly, part of the 30S ribosomal subunit. Forms a bridge to the 50S subunit in the 70S ribosome, contacting the 23S rRNA.

In terms of biological role, one of the primary rRNA binding proteins, it binds directly to 16S rRNA where it helps nucleate assembly of the platform of the 30S subunit by binding and bridging several RNA helices of the 16S rRNA. Forms an intersubunit bridge (bridge B4) with the 23S rRNA of the 50S subunit in the ribosome. The polypeptide is Small ribosomal subunit protein uS15 (Francisella philomiragia subsp. philomiragia (strain ATCC 25017 / CCUG 19701 / FSC 153 / O#319-036)).